The following is a 104-amino-acid chain: Phycoerythrin alpha-2 chain, chloroplastic (104 aa).

The N-terminal 37 residues, 1–37, are a transit peptide targeting the chloroplast; the sequence is MSAKIIAFSAVVATASAFAPTAGFVPRLRSGATSVNM. Lys41 carries the 5-hydroxylysine modification. Positions 56 and 58 each coordinate 15,16-dihydrobiliverdin. The 15,16-dihydrobiliverdin chromophore stretch occupies residues 61–63; that stretch reads KEY. Lys78 serves as a coordination point for 15,16-dihydrobiliverdin.

Belongs to the phycoerythrin family. Heterotetramer of 2 different alpha chains and 2 identical beta chains. The subunit composition could comprise of any combination of 2 out of 4 different alpha units with an invariant beta unit. Contains one covalently linked 15,16-dihydrobiliverdin chromophore.

It is found in the plastid. The protein resides in the chloroplast thylakoid membrane. Light-harvesting photosynthetic tetrapyrrole chromophore-protein from the phycobiliprotein complex. The sequence is that of Phycoerythrin alpha-2 chain, chloroplastic (cpeA2) from Rhodomonas sp. (strain CS 24) (Chroomonas sp. (strain CS24)).